The sequence spans 61 residues: Protein CopA/IncA (61 aa).

In terms of biological role, controls the copy number in gene replication. This Escherichia coli protein is Protein CopA/IncA (copA).